We begin with the raw amino-acid sequence, 254 residues long: Putative epimerase LsrE (254 aa).

A helical membrane pass occupies residues valine 14–leucine 34. Residues histidine 50, aspartate 52, and histidine 81 each contribute to the a divalent metal cation site. Aspartate 52 functions as the Proton acceptor in the catalytic mechanism. Substrate is bound by residues histidine 81, glycine 166 to serine 169, aspartate 199 to serine 201, and glycine 221 to serine 222. Position 199 (aspartate 199) interacts with a divalent metal cation. Aspartate 199 (proton donor) is an active-site residue.

The protein belongs to the ribulose-phosphate 3-epimerase family. A divalent metal cation serves as cofactor.

It is found in the cell membrane. This chain is Putative epimerase LsrE (lsrE), found in Salmonella choleraesuis (strain SC-B67).